The sequence spans 99 residues: Plastocyanin (99 aa).

Positions 1–99 (VEILLGGEDG…AGMVGKVTVN (99 aa)) constitute a Plastocyanin-like domain. Cu cation contacts are provided by His37, Cys84, His87, and Met92.

Belongs to the plastocyanin family. The cofactor is Cu(2+).

The protein localises to the plastid. The protein resides in the chloroplast thylakoid membrane. Functionally, participates in electron transfer between P700 and the cytochrome b6-f complex in photosystem I. In Sambucus nigra (European elder), this protein is Plastocyanin (PETE).